We begin with the raw amino-acid sequence, 293 residues long: ATP synthase subunit a (293 aa).

8 helical membrane passes run 39–59, 73–93, 102–122, 128–148, 172–192, 198–218, 224–244, and 245–265; these read QVFG…VYWI, FVLL…DLIG, YFLM…LGGI, SLTF…IMGI, TLIP…SISL, ILGG…AFST, LALS…HVYF, and DVVV…NYWA.

Belongs to the ATPase A chain family. F-type ATPases have 2 components, CF(1) - the catalytic core - and CF(0) - the membrane proton channel. CF(1) has five subunits: alpha(3), beta(3), gamma(1), delta(1), epsilon(1). CF(0) has three main subunits: a(1), b(2) and c(9-12). The alpha and beta chains form an alternating ring which encloses part of the gamma chain. CF(1) is attached to CF(0) by a central stalk formed by the gamma and epsilon chains, while a peripheral stalk is formed by the delta and b chains.

Its subcellular location is the cell membrane. Key component of the proton channel; it plays a direct role in the translocation of protons across the membrane. This chain is ATP synthase subunit a, found in Mycoplasma pneumoniae (strain ATCC 29342 / M129 / Subtype 1) (Mycoplasmoides pneumoniae).